The sequence spans 224 residues: UPF0758 protein VIBHAR_00653 (224 aa).

The MPN domain maps to 102-224 (ALTSPEQTKL…SVSFAERGWI (123 aa)). His-173, His-175, and Asp-186 together coordinate Zn(2+). The short motif at 173 to 186 (HNHPSGVAEPSQAD) is the JAMM motif element.

This sequence belongs to the UPF0758 family.

In Vibrio campbellii (strain ATCC BAA-1116), this protein is UPF0758 protein VIBHAR_00653.